The sequence spans 557 residues: Dihydroxy-acid dehydratase (557 aa).

Asp78 is a Mg(2+) binding site. Position 119 (Cys119) interacts with [2Fe-2S] cluster. Positions 120 and 121 each coordinate Mg(2+). The residue at position 121 (Lys121) is an N6-carboxylysine. Position 192 (Cys192) interacts with [2Fe-2S] cluster. Glu442 is a Mg(2+) binding site. The active-site Proton acceptor is the Ser468.

It belongs to the IlvD/Edd family. As to quaternary structure, homodimer. [2Fe-2S] cluster serves as cofactor. It depends on Mg(2+) as a cofactor.

The enzyme catalyses (2R)-2,3-dihydroxy-3-methylbutanoate = 3-methyl-2-oxobutanoate + H2O. It catalyses the reaction (2R,3R)-2,3-dihydroxy-3-methylpentanoate = (S)-3-methyl-2-oxopentanoate + H2O. The protein operates within amino-acid biosynthesis; L-isoleucine biosynthesis; L-isoleucine from 2-oxobutanoate: step 3/4. It participates in amino-acid biosynthesis; L-valine biosynthesis; L-valine from pyruvate: step 3/4. Functionally, functions in the biosynthesis of branched-chain amino acids. Catalyzes the dehydration of (2R,3R)-2,3-dihydroxy-3-methylpentanoate (2,3-dihydroxy-3-methylvalerate) into 2-oxo-3-methylpentanoate (2-oxo-3-methylvalerate) and of (2R)-2,3-dihydroxy-3-methylbutanoate (2,3-dihydroxyisovalerate) into 2-oxo-3-methylbutanoate (2-oxoisovalerate), the penultimate precursor to L-isoleucine and L-valine, respectively. The protein is Dihydroxy-acid dehydratase of Bacillus cereus (strain 03BB102).